We begin with the raw amino-acid sequence, 447 residues long: N-succinylarginine dihydrolase (447 aa).

Residues 19–28 (AGLSFGNEAS), asparagine 110, and 137–138 (HR) contribute to the substrate site. Residue glutamate 174 is part of the active site. Arginine 212 is a substrate binding site. Residue histidine 248 is part of the active site. Residues aspartate 250 and asparagine 359 each coordinate substrate. Cysteine 365 functions as the Nucleophile in the catalytic mechanism.

It belongs to the succinylarginine dihydrolase family. Homodimer.

The enzyme catalyses N(2)-succinyl-L-arginine + 2 H2O + 2 H(+) = N(2)-succinyl-L-ornithine + 2 NH4(+) + CO2. It participates in amino-acid degradation; L-arginine degradation via AST pathway; L-glutamate and succinate from L-arginine: step 2/5. Functionally, catalyzes the hydrolysis of N(2)-succinylarginine into N(2)-succinylornithine, ammonia and CO(2). In Escherichia coli O9:H4 (strain HS), this protein is N-succinylarginine dihydrolase.